Consider the following 73-residue polypeptide: Translation initiation factor IF-1 (73 aa).

One can recognise an S1-like domain in the interval Met1–Lys73.

It belongs to the IF-1 family. Component of the 30S ribosomal translation pre-initiation complex which assembles on the 30S ribosome in the order IF-2 and IF-3, IF-1 and N-formylmethionyl-tRNA(fMet); mRNA recruitment can occur at any time during PIC assembly.

Its subcellular location is the cytoplasm. Its function is as follows. One of the essential components for the initiation of protein synthesis. Stabilizes the binding of IF-2 and IF-3 on the 30S subunit to which N-formylmethionyl-tRNA(fMet) subsequently binds. Helps modulate mRNA selection, yielding the 30S pre-initiation complex (PIC). Upon addition of the 50S ribosomal subunit IF-1, IF-2 and IF-3 are released leaving the mature 70S translation initiation complex. The chain is Translation initiation factor IF-1 from Cutibacterium acnes (strain DSM 16379 / KPA171202) (Propionibacterium acnes).